The sequence spans 312 residues: Olfactory receptor 8G50 (312 aa).

Residues 1–28 (MAYSNQSRVTEFIISGLTNKPELQLPLF) are Extracellular-facing. N5 carries an N-linked (GlcNAc...) asparagine glycan. Residues 29–49 (LLFLGIYLFTVLGNLGMIILI) traverse the membrane as a helical segment. At 50–56 (LLSSHLH) the chain is on the cytoplasmic side. A helical transmembrane segment spans residues 57-77 (TPMYFFLSSLSFIDLCYSTII). Over 78–99 (TPKMLVNFVTTKNVISYQECMT) the chain is Extracellular. A disulfide bridge connects residues C97 and C189. A helical transmembrane segment spans residues 100–120 (QLYFFIAFVISECHMLAAMAY). At 121-143 (DRYVAICNPLLYNVTMSYQVCSW) the chain is on the cytoplasmic side. A helical membrane pass occupies residues 144-164 (MVGGVYGMGFIGAAIHTFCML). The Extracellular portion of the chain corresponds to 165–204 (RVVFCKDNIINHYFCDLFPLMELACSSTYVNEVVLLSLSA). Residues 205–225 (FNIFIPTLTILGSYIFIIISI) traverse the membrane as a helical segment. Residues 226–244 (LRIKSTEGRFKAFSTCSSH) are Cytoplasmic-facing. Residues 245-265 (FSAVSVFFGSLAFMYLQPFSV) traverse the membrane as a helical segment. Residues 266-274 (SSKDKGKVS) are Extracellular-facing. A helical transmembrane segment spans residues 275–292 (SVFYTTIVPMLNPMIYSL). Over 293–312 (RNRDVKLALNKLFQKKKFHV) the chain is Cytoplasmic.

Belongs to the G-protein coupled receptor 1 family.

It is found in the cell membrane. Functionally, odorant receptor. This is Olfactory receptor 8G50 from Mus musculus (Mouse).